A 254-amino-acid polypeptide reads, in one-letter code: Metallo-beta-lactamase type 2 (254 aa).

A signal peptide spans 1 to 27 (MMKGWMKCGLAGAVVLMASFWGGSVRA). Asp99 serves as a coordination point for Zn(2+). Residues Thr135 and His174 each contribute to the substrate site. Cys193 is a binding site for Zn(2+). Substrate-binding residues include Lys196 and Asn201. His231 contributes to the Zn(2+) binding site.

Belongs to the metallo-beta-lactamase superfamily. Class-B beta-lactamase family. In terms of assembly, monomer. The cofactor is Zn(2+).

The protein localises to the periplasm. The enzyme catalyses a beta-lactam + H2O = a substituted beta-amino acid. With respect to regulation, competitively inhibited by mercaptophosphonate and pyridine carboxylate derivatives. Also inhibited by the binding of a second zinc ion and by chelating agents such as EDTA. In terms of biological role, confers resistance to the different beta-lactams antibiotics (penicillin, cephalosporin and carbapenem) via the hydrolysis of the beta-lactam ring. It is able to hydrolyze penicillin and imipenem, but is much less active against cephalothin, cefotaxime, meropenem and ceftazidime. This Aeromonas hydrophila protein is Metallo-beta-lactamase type 2.